Reading from the N-terminus, the 2230-residue chain is DNA polymerase epsilon catalytic subunit A (2230 aa).

Over residues 1 to 19 the composition is skewed to polar residues; it reads MPTRQPSKYGNKFRSSSAS. Positions 1–24 are disordered; that stretch reads MPTRQPSKYGNKFRSSSASFKPKR. Zn(2+) contacts are provided by Cys2101, Cys2104, Cys2136, and Cys2139. The CysA-type zinc finger occupies 2101–2139; that stretch reads CNACCLIRDLDLCRDEDVLPEMGSDPNKAAPKPWRCPFC. Residues Cys2170, Cys2173, Cys2185, and Cys2187 each contribute to the [4Fe-4S] cluster site. The CysB motif motif lies at 2170-2187; the sequence is CSKCGGLKISDFMEHCSC.

The protein belongs to the DNA polymerase type-B family. In terms of assembly, heterotetramer. Consists of 4 subunits: pol2, dpb2, dpb3 and dpb4. [4Fe-4S] cluster is required as a cofactor.

It is found in the nucleus. It carries out the reaction DNA(n) + a 2'-deoxyribonucleoside 5'-triphosphate = DNA(n+1) + diphosphate. Functionally, DNA polymerase II participates in chromosomal DNA replication. This chain is DNA polymerase epsilon catalytic subunit A (pol2), found in Aspergillus fumigatus (strain ATCC MYA-4609 / CBS 101355 / FGSC A1100 / Af293) (Neosartorya fumigata).